Consider the following 247-residue polypeptide: Ubiquinone biosynthesis O-methyltransferase (247 aa).

Arginine 40, glycine 71, aspartate 92, and methionine 135 together coordinate S-adenosyl-L-methionine.

The protein belongs to the methyltransferase superfamily. UbiG/COQ3 family.

It catalyses the reaction a 3-demethylubiquinol + S-adenosyl-L-methionine = a ubiquinol + S-adenosyl-L-homocysteine + H(+). The catalysed reaction is a 3-(all-trans-polyprenyl)benzene-1,2-diol + S-adenosyl-L-methionine = a 2-methoxy-6-(all-trans-polyprenyl)phenol + S-adenosyl-L-homocysteine + H(+). The protein operates within cofactor biosynthesis; ubiquinone biosynthesis. In terms of biological role, O-methyltransferase that catalyzes the 2 O-methylation steps in the ubiquinone biosynthetic pathway. The chain is Ubiquinone biosynthesis O-methyltransferase from Ruegeria sp. (strain TM1040) (Silicibacter sp.).